The primary structure comprises 132 residues: Putative flagella-related protein F (132 aa).

The signal sequence occupies residues methionine 1–isoleucine 18. An N-acetylcysteine modification is found at cysteine 19. A lipid anchor (S-archaeol cysteine) is attached at cysteine 19.

The protein to M.jannaschii FlaF.

The protein resides in the archaeal flagellum. The chain is Putative flagella-related protein F (flaF) from Methanococcus voltae.